The chain runs to 448 residues: Deoxyguanosinetriphosphate triphosphohydrolase-like protein (448 aa).

The HD domain occupies 67–260; the sequence is RLTHSLEVSQ…MELADDIAYG (194 aa).

This sequence belongs to the dGTPase family. Type 2 subfamily.

The polypeptide is Deoxyguanosinetriphosphate triphosphohydrolase-like protein (Aliivibrio salmonicida (strain LFI1238) (Vibrio salmonicida (strain LFI1238))).